A 95-amino-acid chain; its full sequence is uncharacterized protein (95 aa).

Residues 1 to 17 (MTSSLVIYIFLWSRLIC) form the signal peptide.

This is an uncharacterized protein from Saccharomyces cerevisiae (strain ATCC 204508 / S288c) (Baker's yeast).